The following is a 279-amino-acid chain: Zinc finger CCCH domain-containing protein 1 (279 aa).

A disordered region spans residues 20-45 (DVIVLSPGPPARRRPPPVKAVEPESG). 2 consecutive C3H1-type zinc fingers follow at residues 56–84 (FYKT…HGDE) and 139–167 (RAIT…HVSA).

The sequence is that of Zinc finger CCCH domain-containing protein 1 from Oryza sativa subsp. japonica (Rice).